Reading from the N-terminus, the 436-residue chain is Adenosylmethionine-8-amino-7-oxononanoate aminotransferase (436 aa).

W56 contributes to the substrate binding site. 114-115 (GS) serves as a coordination point for pyridoxal 5'-phosphate. Y148 serves as a coordination point for substrate. D245 is a binding site for pyridoxal 5'-phosphate. Positions 274, 309, and 400 each coordinate substrate. An N6-(pyridoxal phosphate)lysine modification is found at K274.

It belongs to the class-III pyridoxal-phosphate-dependent aminotransferase family. BioA subfamily. Homodimer. The cofactor is pyridoxal 5'-phosphate.

It is found in the cytoplasm. It carries out the reaction (8S)-8-amino-7-oxononanoate + S-adenosyl-L-methionine = S-adenosyl-4-methylsulfanyl-2-oxobutanoate + (7R,8S)-7,8-diammoniononanoate. The protein operates within cofactor biosynthesis; biotin biosynthesis; 7,8-diaminononanoate from 8-amino-7-oxononanoate (SAM route): step 1/1. Functionally, catalyzes the transfer of the alpha-amino group from S-adenosyl-L-methionine (SAM) to 7-keto-8-aminopelargonic acid (KAPA) to form 7,8-diaminopelargonic acid (DAPA). It is the only aminotransferase known to utilize SAM as an amino donor. This chain is Adenosylmethionine-8-amino-7-oxononanoate aminotransferase, found in Helicobacter pylori (strain ATCC 700392 / 26695) (Campylobacter pylori).